The chain runs to 384 residues: L-cysteine:1D-myo-inositol 2-amino-2-deoxy-alpha-D-glucopyranoside ligase (384 aa).

C16 provides a ligand contact to Zn(2+). L-cysteinyl-5'-AMP is bound by residues C16 to T19, T31, and N54 to T56. The 'HIGH' region signature appears at I18–H28. The short motif at E159 to P164 is the 'ERGGDP' region element. W199 contacts L-cysteinyl-5'-AMP. Residue C203 participates in Zn(2+) binding. Position 221-223 (G221–D223) interacts with L-cysteinyl-5'-AMP. Zn(2+) is bound at residue H228. I255 lines the L-cysteinyl-5'-AMP pocket. Positions K261–S265 match the 'KMSKS' region motif.

It belongs to the class-I aminoacyl-tRNA synthetase family. MshC subfamily. Monomer. Zn(2+) serves as cofactor.

It catalyses the reaction 1D-myo-inositol 2-amino-2-deoxy-alpha-D-glucopyranoside + L-cysteine + ATP = 1D-myo-inositol 2-(L-cysteinylamino)-2-deoxy-alpha-D-glucopyranoside + AMP + diphosphate + H(+). Functionally, catalyzes the ATP-dependent condensation of GlcN-Ins and L-cysteine to form L-Cys-GlcN-Ins. This Mycobacterium avium (strain 104) protein is L-cysteine:1D-myo-inositol 2-amino-2-deoxy-alpha-D-glucopyranoside ligase.